A 31-amino-acid chain; its full sequence is Cyclotide cter-C (31 aa).

The segment at residues 1-31 (GVPCAESCVWIPCTVTALLGCSCKDKVCYLD) is a cross-link (cyclopeptide (Gly-Asp)). Intrachain disulfides connect Cys4-Cys21, Cys8-Cys23, and Cys13-Cys28.

Contains 3 disulfide bonds. In terms of processing, this is a cyclic peptide.

Functionally, probably participates in a plant defense mechanism. The sequence is that of Cyclotide cter-C from Clitoria ternatea (Butterfly pea).